Reading from the N-terminus, the 160-residue chain is Regulatory protein RecX (160 aa).

Belongs to the RecX family.

Its subcellular location is the cytoplasm. Modulates RecA activity. This chain is Regulatory protein RecX, found in Pelodictyon phaeoclathratiforme (strain DSM 5477 / BU-1).